We begin with the raw amino-acid sequence, 679 residues long: Methionine--tRNA ligase (679 aa).

A 'HIGH' region motif is present at residues 15 to 25 (PYANGPVHIGH). Cysteine 147, cysteine 150, cysteine 160, and cysteine 163 together coordinate Zn(2+). The 'KMSKS' region signature appears at 332–336 (KISTS). Residue threonine 335 participates in ATP binding. The 102-residue stretch at 578–679 (DFMKLDIRVG…REVKPGSEVK (102 aa)) folds into the tRNA-binding domain.

It belongs to the class-I aminoacyl-tRNA synthetase family. MetG type 1 subfamily. As to quaternary structure, homodimer. Requires Zn(2+) as cofactor.

Its subcellular location is the cytoplasm. It catalyses the reaction tRNA(Met) + L-methionine + ATP = L-methionyl-tRNA(Met) + AMP + diphosphate. Functionally, is required not only for elongation of protein synthesis but also for the initiation of all mRNA translation through initiator tRNA(fMet) aminoacylation. The sequence is that of Methionine--tRNA ligase from Bacteroides fragilis (strain ATCC 25285 / DSM 2151 / CCUG 4856 / JCM 11019 / LMG 10263 / NCTC 9343 / Onslow / VPI 2553 / EN-2).